The primary structure comprises 533 residues: Early growth response protein 1 (533 aa).

Disordered regions lie at residues 1–94 and 161–237; these read MAAA…EQPY and MTNP…PPPA. The span at 68-77 shows a compositional bias: gly residues; sequence SGGGGGGGSN. Residues 164–189 show a composition bias toward low complexity; the sequence is PPTSSSSAPSPAASSSSSASQSPPLS. A Glycyl lysine isopeptide (Lys-Gly) (interchain with G-Cter in SUMO2) cross-link involves residue K303. The tract at residues 316–336 is disordered; it reads PSRMRKYPNRPSKTPPHERPY. 3 consecutive C2H2-type zinc fingers follow at residues 336–360, 366–388, and 394–416; these read YACP…IRIH, FQCR…IRTH, and FACD…TKIH. Positions 407-478 are disordered; that stretch reads DERKRHTKIH…SSTYPSPAHS (72 aa). Residues 411-421 show a composition bias toward basic residues; it reads RHTKIHLRQKD. A compositionally biased stretch (low complexity) spans 427–475; sequence SVVASPAASSLSSYPSPVATSYPSPATTSFPSPVPTSYSSPGSSTYPSP.

The protein belongs to the EGR C2H2-type zinc-finger protein family. As to quaternary structure, interacts with SNAI1 and SP1 upon 12-O-tetradecanoylphorbol-13-acetate (TPA) induction. Detected in lung vasculature and in mononuclear phagocytes. Detected in liver (at protein level). Expressed in the liver in a circadian manner.

It is found in the nucleus. The protein resides in the cytoplasm. Transcriptional regulator. Recognizes and binds to the DNA sequence 5'-GCG(T/G)GGGCG-3'(EGR-site) in the promoter region of target genes. Binds double-stranded target DNA, irrespective of the cytosine methylation status. Regulates the transcription of numerous target genes, and thereby plays an important role in regulating the response to growth factors, DNA damage, and ischemia. Plays a role in the regulation of cell survival, proliferation and cell death. Activates expression of p53/TP53 and TGFB1, and thereby helps prevent tumor formation. Required for normal progress through mitosis and normal proliferation of hepatocytes after partial hepatectomy. Mediates responses to ischemia and hypoxia; regulates the expression of proteins such as IL1B and CXCL2 that are involved in inflammatory processes and development of tissue damage after ischemia. Regulates biosynthesis of luteinizing hormone (LHB) in the pituitary. Regulates the amplitude of the expression rhythms of clock genes: BMAL1, PER2 and NR1D1 in the liver via the activation of PER1 (clock repressor) transcription. Regulates the rhythmic expression of core-clock gene BMAL1 in the suprachiasmatic nucleus (SCN). The polypeptide is Early growth response protein 1 (Egr1) (Mus musculus (Mouse)).